Reading from the N-terminus, the 375-residue chain is DNA replication and repair protein RecF (375 aa).

Residue 30 to 37 participates in ATP binding; that stretch reads GDNAQGKT.

Belongs to the RecF family.

The protein localises to the cytoplasm. Its function is as follows. The RecF protein is involved in DNA metabolism; it is required for DNA replication and normal SOS inducibility. RecF binds preferentially to single-stranded, linear DNA. It also seems to bind ATP. In Symbiobacterium thermophilum (strain DSM 24528 / JCM 14929 / IAM 14863 / T), this protein is DNA replication and repair protein RecF.